The following is a 281-amino-acid chain: 4-diphosphocytidyl-2-C-methyl-D-erythritol kinase (281 aa).

Residue lysine 11 is part of the active site. 95 to 105 (PVAAGLGGGSS) is an ATP binding site. Aspartate 137 is a catalytic residue.

The protein belongs to the GHMP kinase family. IspE subfamily.

The enzyme catalyses 4-CDP-2-C-methyl-D-erythritol + ATP = 4-CDP-2-C-methyl-D-erythritol 2-phosphate + ADP + H(+). It participates in isoprenoid biosynthesis; isopentenyl diphosphate biosynthesis via DXP pathway; isopentenyl diphosphate from 1-deoxy-D-xylulose 5-phosphate: step 3/6. Catalyzes the phosphorylation of the position 2 hydroxy group of 4-diphosphocytidyl-2C-methyl-D-erythritol. This is 4-diphosphocytidyl-2-C-methyl-D-erythritol kinase from Geobacter metallireducens (strain ATCC 53774 / DSM 7210 / GS-15).